The sequence spans 1184 residues: uncharacterized protein (1184 aa).

Disordered stretches follow at residues 115 to 152 (ETSS…AHVS) and 397 to 426 (TYKP…VPER). Polar residues-rich tracts occupy residues 137–152 (HVMN…AHVS) and 397–421 (TYKP…TSHN). S686 carries the post-translational modification Phosphoserine. Composition is skewed to basic and acidic residues over residues 705–767 (LSER…ESAH), 783–792 (FEHETEPSHY), 849–863 (SHAH…RDLG), and 891–902 (YLHDEKTRDTLT). Disordered stretches follow at residues 705–870 (LSER…FGDV) and 890–1017 (DYLH…SSPK). S905 bears the Phosphoserine mark. Residues 920-932 (EDHPHASEAERAH) are compositionally biased toward basic and acidic residues. A compositionally biased stretch (low complexity) spans 941-950 (SSESSPESQS). Residues 999–1011 (PRERLDDNAKEIL) show a composition bias toward basic and acidic residues. Residue S1018 is modified to Phosphoserine. Disordered regions lie at residues 1029–1107 (NRKD…IGTQ) and 1135–1154 (DVDN…KSRP). Over residues 1032-1045 (DKAAVKRMLEEDSS) the composition is skewed to basic and acidic residues. The segment covering 1073–1107 (PAVNNSTKPVAVTSKNGHSRNGSHAAHSNNVIGTQ) has biased composition (polar residues). Positions 1138-1150 (NVVSGHSNVNGVS) are enriched in low complexity.

It is found in the cytoplasm. This is an uncharacterized protein from Schizosaccharomyces pombe (strain 972 / ATCC 24843) (Fission yeast).